Here is a 498-residue protein sequence, read N- to C-terminus: ATP synthase subunit beta, chloroplastic (498 aa).

T6 is modified (phosphothreonine). The residue at position 13 (S13) is a Phosphoserine. 172–179 (GGAGVGKT) serves as a coordination point for ATP.

This sequence belongs to the ATPase alpha/beta chains family. In terms of assembly, F-type ATPases have 2 components, CF(1) - the catalytic core - and CF(0) - the membrane proton channel. CF(1) has five subunits: alpha(3), beta(3), gamma(1), delta(1), epsilon(1). CF(0) has four main subunits: a(1), b(1), b'(1) and c(9-12).

The protein localises to the plastid. The protein resides in the chloroplast thylakoid membrane. It carries out the reaction ATP + H2O + 4 H(+)(in) = ADP + phosphate + 5 H(+)(out). Its function is as follows. Produces ATP from ADP in the presence of a proton gradient across the membrane. The catalytic sites are hosted primarily by the beta subunits. The protein is ATP synthase subunit beta, chloroplastic of Olimarabidopsis pumila (Dwarf rocket).